The sequence spans 195 residues: Imidazoleglycerol-phosphate dehydratase (195 aa).

Belongs to the imidazoleglycerol-phosphate dehydratase family.

It is found in the cytoplasm. The catalysed reaction is D-erythro-1-(imidazol-4-yl)glycerol 3-phosphate = 3-(imidazol-4-yl)-2-oxopropyl phosphate + H2O. It participates in amino-acid biosynthesis; L-histidine biosynthesis; L-histidine from 5-phospho-alpha-D-ribose 1-diphosphate: step 6/9. This Cupriavidus pinatubonensis (strain JMP 134 / LMG 1197) (Cupriavidus necator (strain JMP 134)) protein is Imidazoleglycerol-phosphate dehydratase.